Reading from the N-terminus, the 491-residue chain is Glycogen synthase 2 (491 aa).

Position 16 (Lys16) interacts with ADP-alpha-D-glucose.

Belongs to the glycosyltransferase 1 family. Bacterial/plant glycogen synthase subfamily.

It catalyses the reaction [(1-&gt;4)-alpha-D-glucosyl](n) + ADP-alpha-D-glucose = [(1-&gt;4)-alpha-D-glucosyl](n+1) + ADP + H(+). The protein operates within glycan biosynthesis; glycogen biosynthesis. Its function is as follows. Synthesizes alpha-1,4-glucan chains using ADP-glucose. The protein is Glycogen synthase 2 of Nitrosococcus oceani (strain ATCC 19707 / BCRC 17464 / JCM 30415 / NCIMB 11848 / C-107).